The following is a 320-amino-acid chain: Apolipoprotein E (320 aa).

Residues 1-18 form the signal peptide; the sequence is MKVLWAALLVAFLAGCQG. 8 tandem repeats follow at residues 82 to 103, 104 to 125, 126 to 147, 148 to 169, 170 to 191, 192 to 213, 214 to 236, and 237 to 258. Residues 82 to 258 form an 8 X 22 AA approximate tandem repeats region; the sequence is ALMDETMKEL…RLDEVKEQVE (177 aa). Met145 carries the post-translational modification Methionine sulfoxide. The residue at position 149 (Ser149) is a Phosphoserine. The interval 160–170 is LDL and other lipoprotein receptors binding; sequence HLRKLRKRLLR. 164-167 is a heparin binding site; sequence LRKR. The interval 212–293 is lipid-binding and lipoprotein association; the sequence is AATVGSSLAG…SWFEPLVEDM (82 aa). Residue 232–239 coordinates heparin; it reads GERLRARM. The tract at residues 269 to 320 is homooligomerization; that stretch reads QQMRLQAEAFQARLKSWFEPLVEDMQRQWAGLVEKVQAAVGASAAPVPSDNH. Residues 281-293 form a specificity for association with VLDL region; sequence RLKSWFEPLVEDM.

This sequence belongs to the apolipoprotein A1/A4/E family. In terms of assembly, homotetramer. May interact with ABCA1; functionally associated with ABCA1 in the biogenesis of HDLs. May interact with APP/A4 amyloid-beta peptide; the interaction is extremely stable in vitro but its physiological significance is unclear. May interact with MAPT. May interact with MAP2. In the cerebrospinal fluid, interacts with secreted SORL1. Interacts with PMEL; this allows the loading of PMEL luminal fragment on ILVs to induce fibril nucleation. Post-translationally, APOE exists as multiple glycosylated and sialylated glycoforms within cells and in plasma. The extent of glycosylation and sialylation are tissue and context specific. In terms of processing, glycated in plasma VLDL. Phosphorylated by FAM20C in the extracellular medium.

Its subcellular location is the secreted. It is found in the extracellular space. The protein resides in the extracellular matrix. It localises to the extracellular vesicle. The protein localises to the endosome. Its subcellular location is the multivesicular body. Functionally, APOE is an apolipoprotein, a protein associating with lipid particles, that mainly functions in lipoprotein-mediated lipid transport between organs via the plasma and interstitial fluids. APOE is a core component of plasma lipoproteins and is involved in their production, conversion and clearance. Apolipoproteins are amphipathic molecules that interact both with lipids of the lipoprotein particle core and the aqueous environment of the plasma. As such, APOE associates with chylomicrons, chylomicron remnants, very low density lipoproteins (VLDL) and intermediate density lipoproteins (IDL) but shows a preferential binding to high-density lipoproteins (HDL). It also binds a wide range of cellular receptors including the LDL receptor/LDLR, the LDL receptor-related proteins LRP1, LRP2 and LRP8 and the very low-density lipoprotein receptor/VLDLR that mediate the cellular uptake of the APOE-containing lipoprotein particles. Finally, APOE also has a heparin-binding activity and binds heparan-sulfate proteoglycans on the surface of cells, a property that supports the capture and the receptor-mediated uptake of APOE-containing lipoproteins by cells. A main function of APOE is to mediate lipoprotein clearance through the uptake of chylomicrons, VLDLs, and HDLs by hepatocytes. APOE is also involved in the biosynthesis by the liver of VLDLs as well as their uptake by peripheral tissues ensuring the delivery of triglycerides and energy storage in muscle, heart and adipose tissues. By participating in the lipoprotein-mediated distribution of lipids among tissues, APOE plays a critical role in plasma and tissues lipid homeostasis. APOE is also involved in two steps of reverse cholesterol transport, the HDLs-mediated transport of cholesterol from peripheral tissues to the liver, and thereby plays an important role in cholesterol homeostasis. First, it is functionally associated with ABCA1 in the biogenesis of HDLs in tissues. Second, it is enriched in circulating HDLs and mediates their uptake by hepatocytes. APOE also plays an important role in lipid transport in the central nervous system, regulating neuron survival and sprouting. The protein is Apolipoprotein E (APOE) of Plecturocebus moloch (Dusky titi monkey).